The chain runs to 471 residues: MSKKYDAGVKEYRDTYWTPEYVPLDTDLLACFKCTGQEGVPREEVAAAVAAESSTGTWSTVWSELLTDLEFYKGRCYRIEDVPGDPEAFYAFIAYPLDLFEEGSITNVLTSLVGNVFGFKALRHLRLEDIRFPIAFIKTCGGPPNGIVVERDRLNKYGRPLLGCTIKPKLGLSGKNYGRVVYECLRGGLDLTKDDENINSQPFQRWRERFEFVAEAVKLAQRETGEVKGHYLNCTANTPEELYERAEFAKELDMPIIMHDYITGGFTANTGLANWCRKNGMLLHIHRAMHAVIDRHPKHGIHFRVLAKCLRLSGGDQLHTGTVVGKLEGDRQTTLGYIDNLRESFVPEDRSRGNFFDQDWGSMPGVFAVASGGIHVWHMPALLAIFGDDSCLQFGGGTHGHPWGSAAGAAANRVALEACVKARNAGREIEKESRDILMEAAKHSPELAIALETWKEIKFEFDTVDKLDVQG.

Positions 115 and 165 each coordinate substrate. The active-site Proton acceptor is the K167. Residue K169 participates in substrate binding. 3 residues coordinate Mg(2+): K193, D195, and E196. K193 carries the N6-carboxylysine modification. H286 acts as the Proton acceptor in catalysis. The substrate site is built by R287, H319, and S371.

It belongs to the RuBisCO large chain family. Type I subfamily. Heterohexadecamer of 8 large chains and 8 small chains. It depends on Mg(2+) as a cofactor.

It localises to the carboxysome. The catalysed reaction is 2 (2R)-3-phosphoglycerate + 2 H(+) = D-ribulose 1,5-bisphosphate + CO2 + H2O. It carries out the reaction D-ribulose 1,5-bisphosphate + O2 = 2-phosphoglycolate + (2R)-3-phosphoglycerate + 2 H(+). Its function is as follows. RuBisCO catalyzes two reactions: the carboxylation of D-ribulose 1,5-bisphosphate, the primary event in carbon dioxide fixation, as well as the oxidative fragmentation of the pentose substrate in the photorespiration process. Both reactions occur simultaneously and in competition at the same active site. This Prochlorococcus marinus (strain MIT 9301) protein is Ribulose bisphosphate carboxylase large chain.